We begin with the raw amino-acid sequence, 87 residues long: Putative regulatory protein GWCH70_1057 (87 aa).

Belongs to the RemA family.

The chain is Putative regulatory protein GWCH70_1057 from Geobacillus sp. (strain WCH70).